We begin with the raw amino-acid sequence, 310 residues long: Protein BIG GRAIN 1 (310 aa).

The tract at residues 81-141 (RAPGPHATTS…KKAKKPGASI (61 aa)) is disordered. The segment covering 90-106 (SSSSECSSYGGFSSSEA) has biased composition (low complexity).

This sequence belongs to the BIG GRAIN 1 (BG1) plant protein family.

It is found in the cell membrane. In terms of biological role, involved in auxin transport. Positive regulator of the auxin signaling pathway involved in gravitropism, plant growth and grain development. The protein is Protein BIG GRAIN 1 of Oryza sativa subsp. indica (Rice).